Consider the following 497-residue polypeptide: Phenylalanine--tRNA ligase alpha subunit (497 aa).

Residues T329, Q372–E374, and Y412 each bind L-phenylalanine. A Mg(2+)-binding site is contributed by E414. Position 438 (F438) interacts with L-phenylalanine.

It belongs to the class-II aminoacyl-tRNA synthetase family. Phe-tRNA synthetase alpha subunit type 2 subfamily. In terms of assembly, heterotetramer; dimer of two heterodimers formed by alpha and beta subunits. It depends on Mg(2+) as a cofactor.

The protein resides in the cytoplasm. The enzyme catalyses tRNA(Phe) + L-phenylalanine + ATP = L-phenylalanyl-tRNA(Phe) + AMP + diphosphate + H(+). This chain is Phenylalanine--tRNA ligase alpha subunit (farsa), found in Danio rerio (Zebrafish).